A 519-amino-acid chain; its full sequence is uncharacterized protein (519 aa).

The next 14 helical transmembrane spans lie at 37–57 (ISMSLFHEIVFVFIACTAQLM), 82–102 (GQLSWFPASYSLTVGTFILIA), 114–134 (MFVLGYIWFCIWSLISGFSYY), 146–166 (ALTGIAPAFLLPNALALLGRV), 175–195 (LIFALFGATAPNGFLLGSVFS), 209–229 (WTTAIVCIVFAIIGYFAIPHI), 240–260 (FDYLGAFFGVSGLVLINFSWN), 269–289 (VPYVYILLIIGFLSLVVFVLV), 309–329 (CVLICVAAGWACFGIWMYYLW), 337–357 (FATPLLVTAQLTPVGISGCAA), 373–393 (IMVVSMIAFTVGTILIATAPI), 402–422 (FVSIIVTPWGMDMSFPAATLM), 434–454 (IAASLVSTVVNYSISIGLGIA), and 475–495 (AWYMGTGFGGLGVCVAILTVF).

This sequence belongs to the major facilitator superfamily.

The protein resides in the endoplasmic reticulum. It localises to the membrane. This is an uncharacterized protein from Schizosaccharomyces pombe (strain 972 / ATCC 24843) (Fission yeast).